The primary structure comprises 213 residues: Thiamine-phosphate synthase (213 aa).

Residues 40 to 44 (QFREK) and Asn75 contribute to the 4-amino-2-methyl-5-(diphosphooxymethyl)pyrimidine site. Residues Asp76 and Asp95 each coordinate Mg(2+). Ser113 contributes to the 4-amino-2-methyl-5-(diphosphooxymethyl)pyrimidine binding site. 139–141 (TPS) is a 2-[(2R,5Z)-2-carboxy-4-methylthiazol-5(2H)-ylidene]ethyl phosphate binding site. Lys142 lines the 4-amino-2-methyl-5-(diphosphooxymethyl)pyrimidine pocket. 2-[(2R,5Z)-2-carboxy-4-methylthiazol-5(2H)-ylidene]ethyl phosphate is bound by residues Gly171 and 191–192 (IS).

The protein belongs to the thiamine-phosphate synthase family. Mg(2+) serves as cofactor.

It carries out the reaction 2-[(2R,5Z)-2-carboxy-4-methylthiazol-5(2H)-ylidene]ethyl phosphate + 4-amino-2-methyl-5-(diphosphooxymethyl)pyrimidine + 2 H(+) = thiamine phosphate + CO2 + diphosphate. The enzyme catalyses 2-(2-carboxy-4-methylthiazol-5-yl)ethyl phosphate + 4-amino-2-methyl-5-(diphosphooxymethyl)pyrimidine + 2 H(+) = thiamine phosphate + CO2 + diphosphate. The catalysed reaction is 4-methyl-5-(2-phosphooxyethyl)-thiazole + 4-amino-2-methyl-5-(diphosphooxymethyl)pyrimidine + H(+) = thiamine phosphate + diphosphate. The protein operates within cofactor biosynthesis; thiamine diphosphate biosynthesis; thiamine phosphate from 4-amino-2-methyl-5-diphosphomethylpyrimidine and 4-methyl-5-(2-phosphoethyl)-thiazole: step 1/1. In terms of biological role, condenses 4-methyl-5-(beta-hydroxyethyl)thiazole monophosphate (THZ-P) and 2-methyl-4-amino-5-hydroxymethyl pyrimidine pyrophosphate (HMP-PP) to form thiamine monophosphate (TMP). The protein is Thiamine-phosphate synthase of Staphylococcus aureus (strain JH1).